Consider the following 244-residue polypeptide: DNA polymerase sliding clamp (244 aa).

Belongs to the PCNA family. Homotrimer. The subunits circularize to form a toroid; DNA passes through its center. Replication factor C (RFC) is required to load the toroid on the DNA.

In terms of biological role, sliding clamp subunit that acts as a moving platform for DNA processing. Responsible for tethering the catalytic subunit of DNA polymerase and other proteins to DNA during high-speed replication. The polypeptide is DNA polymerase sliding clamp (Methanobrevibacter smithii (strain ATCC 35061 / DSM 861 / OCM 144 / PS)).